A 224-amino-acid chain; its full sequence is Cytidylate kinase (224 aa).

An ATP-binding site is contributed by 11–19; it reads GPAAAGKST.

Belongs to the cytidylate kinase family. Type 1 subfamily.

Its subcellular location is the cytoplasm. It catalyses the reaction CMP + ATP = CDP + ADP. It carries out the reaction dCMP + ATP = dCDP + ADP. This Geobacillus sp. (strain WCH70) protein is Cytidylate kinase.